Consider the following 473-residue polypeptide: Photosystem II CP43 reaction center protein (473 aa).

A propeptide spanning residues 1–14 (MKTLYSLRRFYPVE) is cleaved from the precursor. Threonine 15 carries the post-translational modification N-acetylthreonine. Threonine 15 bears the Phosphothreonine mark. 5 helical membrane-spanning segments follow: residues 69–93 (LFEV…PHLA), 134–155 (LLGP…KDRN), 178–200 (KALY…RKIT), 255–275 (KPFA…LSYS), and 291–312 (WFNN…ASQA). Glutamate 367 contributes to the [CaMn4O5] cluster binding site. Residues 447–471 (RARAAAAGFEKGIDRDFEPVLSMTP) traverse the membrane as a helical segment.

This sequence belongs to the PsbB/PsbC family. PsbC subfamily. PSII is composed of 1 copy each of membrane proteins PsbA, PsbB, PsbC, PsbD, PsbE, PsbF, PsbH, PsbI, PsbJ, PsbK, PsbL, PsbM, PsbT, PsbX, PsbY, PsbZ, Psb30/Ycf12, at least 3 peripheral proteins of the oxygen-evolving complex and a large number of cofactors. It forms dimeric complexes. Binds multiple chlorophylls and provides some of the ligands for the Ca-4Mn-5O cluster of the oxygen-evolving complex. It may also provide a ligand for a Cl- that is required for oxygen evolution. PSII binds additional chlorophylls, carotenoids and specific lipids. is required as a cofactor.

It is found in the plastid. It localises to the chloroplast thylakoid membrane. Functionally, one of the components of the core complex of photosystem II (PSII). It binds chlorophyll and helps catalyze the primary light-induced photochemical processes of PSII. PSII is a light-driven water:plastoquinone oxidoreductase, using light energy to abstract electrons from H(2)O, generating O(2) and a proton gradient subsequently used for ATP formation. This chain is Photosystem II CP43 reaction center protein, found in Gossypium hirsutum (Upland cotton).